The sequence spans 159 residues: Transcription elongation factor GreA (159 aa).

Residues 43 to 76 adopt a coiled-coil conformation; the sequence is LSENAEYDAAREEQSQLEAKIGDLENKLASATIL.

Belongs to the GreA/GreB family.

Its function is as follows. Necessary for efficient RNA polymerase transcription elongation past template-encoded arresting sites. The arresting sites in DNA have the property of trapping a certain fraction of elongating RNA polymerases that pass through, resulting in locked ternary complexes. Cleavage of the nascent transcript by cleavage factors such as GreA or GreB allows the resumption of elongation from the new 3'terminus. GreA releases sequences of 2 to 3 nucleotides. The sequence is that of Transcription elongation factor GreA from Chlorobaculum parvum (strain DSM 263 / NCIMB 8327) (Chlorobium vibrioforme subsp. thiosulfatophilum).